The primary structure comprises 337 residues: Protein SphX (337 aa).

A signal peptide spans 1 to 30 (MTTLKPALRRAAVLLPIAAVASSLFPIQEA).

It belongs to the PstS family. Post-translationally, the N-terminus is blocked.

The protein resides in the cell inner membrane. Functionally, may be involved in the system for phosphate transport across the cytoplasmic membrane. The polypeptide is Protein SphX (sphX) (Synechococcus elongatus (strain ATCC 33912 / PCC 7942 / FACHB-805) (Anacystis nidulans R2)).